A 715-amino-acid chain; its full sequence is Fatty acid oxidation complex subunit alpha (715 aa).

The tract at residues 1-190 is enoyl-CoA hydratase/isomerase; that stretch reads MIYEGKAITV…KVGAVDAVVA (190 aa). Aspartate 297 contributes to the substrate binding site. The segment at 312-715 is 3-hydroxyacyl-CoA dehydrogenase; that stretch reads HDVKQAAVLG…MAKNGQRFFN (404 aa). Residues methionine 325, aspartate 344, 401 to 403, lysine 408, and serine 430 each bind NAD(+); that span reads VVE. Catalysis depends on histidine 451, which acts as the For 3-hydroxyacyl-CoA dehydrogenase activity. NAD(+) is bound at residue asparagine 454. Asparagine 501 and tyrosine 660 together coordinate substrate.

In the N-terminal section; belongs to the enoyl-CoA hydratase/isomerase family. It in the C-terminal section; belongs to the 3-hydroxyacyl-CoA dehydrogenase family. As to quaternary structure, heterotetramer of two alpha chains (FadB) and two beta chains (FadA).

The catalysed reaction is a (3S)-3-hydroxyacyl-CoA + NAD(+) = a 3-oxoacyl-CoA + NADH + H(+). It carries out the reaction a (3S)-3-hydroxyacyl-CoA = a (2E)-enoyl-CoA + H2O. It catalyses the reaction a 4-saturated-(3S)-3-hydroxyacyl-CoA = a (3E)-enoyl-CoA + H2O. The enzyme catalyses (3S)-3-hydroxybutanoyl-CoA = (3R)-3-hydroxybutanoyl-CoA. The catalysed reaction is a (3Z)-enoyl-CoA = a 4-saturated (2E)-enoyl-CoA. It carries out the reaction a (3E)-enoyl-CoA = a 4-saturated (2E)-enoyl-CoA. It functions in the pathway lipid metabolism; fatty acid beta-oxidation. Functionally, involved in the aerobic and anaerobic degradation of long-chain fatty acids via beta-oxidation cycle. Catalyzes the formation of 3-oxoacyl-CoA from enoyl-CoA via L-3-hydroxyacyl-CoA. It can also use D-3-hydroxyacyl-CoA and cis-3-enoyl-CoA as substrate. The chain is Fatty acid oxidation complex subunit alpha from Pseudomonas entomophila (strain L48).